Here is a 784-residue protein sequence, read N- to C-terminus: Toll-like receptor 2 (784 aa).

A signal peptide spans 1-24 (MLRALWLFWILVAITVLFSKRCSA). At 25 to 587 (QESLSCDASG…ARPSVLECHQ (563 aa)) the chain is on the extracellular side. Cys-30 and Cys-36 are disulfide-bonded. LRR repeat units lie at residues 54–77 (MKSL…ACAN), 78–101 (LQVL…SLGS), 102–125 (LEHL…PLSS), 126–150 (LKYL…NLTN), 151–175 (LQTL…GLTS), 176–199 (LNEL…SIRD), 200–223 (IHHL…ILSS), 224–250 (VRYL…VSSP), 251–278 (MKKL…YILE), 279–308 (LSEV…ELGK), 309–337 (VETV…LLEK), 338–361 (VKRI…HLKS), 362–388 (LEFL…AWPS), 389–414 (LQTL…TLKN), 415–437 (LTSL…WPEK), 438–457 (MRFL…CIPQ), 458–478 (TLEV…FLPR), 479–500 (LQEL…LFPV), and 501–524 (LLVM…SFPK). An N-linked (GlcNAc...) asparagine glycan is attached at Asn-147. A disulfide bridge connects residues Cys-353 and Cys-382. An N-linked (GlcNAc...) asparagine glycan is attached at Asn-414. The cysteines at positions 432 and 454 are disulfide-linked. Asn-442 carries an N-linked (GlcNAc...) asparagine glycan. Residues 525–576 (LETLEAGDNHFVCSCELLSFTMETPALAQILVDWPDSYLCDSPPRLHGHRLQ) form the LRRCT domain. A helical membrane pass occupies residues 588–608 (AALVSGVCCALLLLILLVGAL). The Cytoplasmic portion of the chain corresponds to 609-784 (CHHFHGLWYL…WVNLRTAIKS (176 aa)). The 144-residue stretch at 639–782 (VCYDAFVSYS…VFWVNLRTAI (144 aa)) folds into the TIR domain. Lys-754 participates in a covalent cross-link: Glycyl lysine isopeptide (Lys-Gly) (interchain with G-Cter in ubiquitin). Positions 761 to 778 (YLEWPLDEGQQEVFWVNL) match the ATG16L1-binding motif motif.

Belongs to the Toll-like receptor family. Interacts with LY96, TLR1 and TLR6 (via extracellular domain). TLR2 seems to exist in heterodimers with either TLR1 or TLR6 before stimulation by the ligand. The heterodimers form bigger oligomers in response to their corresponding ligands as well as further heterotypic associations with other receptors such as CD14 and/or CD36. Binds MYD88 (via TIR domain). Interacts with TICAM1. Interacts with CNPY3. Interacts with ATG16L1. Interacts with non-modified M.tuberculosis protein MPT83. Interacts with PPP1R11. Interacts with TIRAP. In terms of assembly, (Microbial infection) Interacts with Staphylococcus aureus protein SSL3; this interaction inhibits TLR2-mediated cytokine production. As to quaternary structure, (Microbial infection) Interacts with Toxoplasma gondii micronemal protein 1 (MIC1); the interaction promotes activation of bone marrow-derived dendritic cells and macrophages. Interacts with Toxoplasma gondii micronemal protein 4 (MIC4); the interaction promotes activation of bone marrow-derived dendritic cells and macrophages. Post-translationally, ubiquitinated at Lys-754 by PPP1R11, leading to its degradation. Deubiquitinated by USP2. Glycosylation of Asn-442 is critical for secretion of the N-terminal ectodomain of TLR2. In terms of tissue distribution, detected in a macrophage cell line, smooth muscle, lung, spleen, thymus, brain and adipose tissue. Cell surface expression detected in lung alveolar macrophages, dendritic macrophages and at lower levels in lung macrophages (at protein level).

It localises to the cell membrane. The protein resides in the cytoplasmic vesicle. It is found in the phagosome membrane. Its subcellular location is the membrane raft. Cooperates with LY96 to mediate the innate immune response to bacterial lipoproteins and other microbial cell wall components. Cooperates with TLR1 or TLR6 to mediate the innate immune response to bacterial lipoproteins or lipopeptides. Acts via MYD88 and TRAF6, leading to NF-kappa-B activation, cytokine secretion and the inflammatory response. May also promote apoptosis in response to lipoproteins. Forms activation clusters composed of several receptors depending on the ligand, these clusters trigger signaling from the cell surface and subsequently are targeted to the Golgi in a lipid-raft dependent pathway. Forms the cluster TLR2:TLR6:CD14:CD36 in response to diacylated lipopeptides and TLR2:TLR1:CD14 in response to triacylated lipopeptides. Recognizes M.tuberculosis major T-antigen EsxA (ESAT-6) which inhibits downstream MYD88-dependent signaling. Acts as the major receptor for M.tuberculosis lipoproteins LprA, LprG, LpqH and PhoS1 (pstS1), in conjunction with TLR1 and for some but not all lipoproteins CD14 and/or CD36. The lipoproteins act as agonists to modulate antigen presenting cell functions in response to the pathogen. Recombinant MPT83 from M.tuberculosis stimulates secretion of cytokines (TNF-alpha, IL-6 and IL-12p40) by mouse macrophage cell lines in a TLR2-dependent fashion, which leads to increased host innate immunity responses against the bacterium. Lung macrophages which express low levels of TLR2 respond poorly to stimulation by M.tuberculosis LpqH. Required for normal uptake of M.tuberculosis, a process that is inhibited by M.tuberculosis LppM. Interacts with TICAM2. Functionally, (Microbial infection) Mediates activation of bone marrow-derived dendritic cells and macrophages, and production of pro-inflammatory cytokines, such as IL12 (IL12B/IL12A), triggered by Toxoplasma gondii micronemal protein 4 (MIC4) and micronemal protein 1 (MIC1). This chain is Toll-like receptor 2 (Tlr2), found in Mus musculus (Mouse).